We begin with the raw amino-acid sequence, 311 residues long: MLNTTFANAKFANPFMNASGVHCMTIEDLEELKASQAGAYITKSSTLEKREGNPLPRYVDLELGSINSMGLPNLGFDYYLDYVLKNQKENAQEGPIFFSIAGMSAAENIAMLKKIQESDFSGITELNLSCPNVPGKPQLAYDFEATEKLLKEVFTFFTKPLGVKLPPYFDLVHFDIMAEILNQFPLTYVNSVNSIGNGLFIDPEAESVVIKPKDGFGGIGGAYIKPTALANVRAFYTRLKPEIQIIGTGGIETGQDAFEHLLCGATMLQIGTALHKEGPAIFDRIIKELEEIMNQKGYQSIADFHGKLKSL.

FMN is bound by residues Ser-19 and Lys-43–Ser-44. Residues Lys-43, Asn-67–Leu-71, and Asn-127 each bind substrate. Residue Asn-127 coordinates FMN. Residue Cys-130 is the Nucleophile of the active site. Residues Lys-164 and Val-192 each contribute to the FMN site. Asn-193–Ser-194 contacts substrate. Residues Gly-221, Gly-249 to Gly-250, and Gly-271 to Thr-272 each bind FMN.

It belongs to the dihydroorotate dehydrogenase family. Type 1 subfamily. As to quaternary structure, homodimer. The cofactor is FMN.

The protein localises to the cytoplasm. It catalyses the reaction (S)-dihydroorotate + fumarate = orotate + succinate. Its pathway is pyrimidine metabolism; UMP biosynthesis via de novo pathway. Catalyzes the conversion of dihydroorotate to orotate with fumarate as the electron acceptor. In Lactococcus lactis subsp. cremoris (Streptococcus cremoris), this protein is Dihydroorotate dehydrogenase A (fumarate) (pyrDA).